Reading from the N-terminus, the 97-residue chain is Cysteine-rich and transmembrane domain-containing protein 1 (97 aa).

Over residues Met1–Gly40 the composition is skewed to pro residues. The interval Met1–Thr61 is disordered. Low complexity predominate over residues Tyr41–Gly50. The helical transmembrane segment at Leu74–Cys91 threads the bilayer.

Belongs to the CYSTM1 family.

The protein resides in the membrane. In Homo sapiens (Human), this protein is Cysteine-rich and transmembrane domain-containing protein 1 (CYSTM1).